A 159-amino-acid chain; its full sequence is ATP synthase subunit b (159 aa).

A helical membrane pass occupies residues 8–28 (ILATIINFIILILILKHFFWD).

The protein belongs to the ATPase B chain family. As to quaternary structure, F-type ATPases have 2 components, F(1) - the catalytic core - and F(0) - the membrane proton channel. F(1) has five subunits: alpha(3), beta(3), gamma(1), delta(1), epsilon(1). F(0) has three main subunits: a(1), b(2) and c(10-14). The alpha and beta chains form an alternating ring which encloses part of the gamma chain. F(1) is attached to F(0) by a central stalk formed by the gamma and epsilon chains, while a peripheral stalk is formed by the delta and b chains.

The protein localises to the cell membrane. Functionally, f(1)F(0) ATP synthase produces ATP from ADP in the presence of a proton or sodium gradient. F-type ATPases consist of two structural domains, F(1) containing the extramembraneous catalytic core and F(0) containing the membrane proton channel, linked together by a central stalk and a peripheral stalk. During catalysis, ATP synthesis in the catalytic domain of F(1) is coupled via a rotary mechanism of the central stalk subunits to proton translocation. Component of the F(0) channel, it forms part of the peripheral stalk, linking F(1) to F(0). In Clostridium perfringens (strain SM101 / Type A), this protein is ATP synthase subunit b.